The following is a 660-amino-acid chain: Neurexin-2-beta (660 aa).

Over residues 1 to 10 the composition is skewed to gly residues; it reads MPPGGSGQGG. Residues 1–27 are disordered; it reads MPPGGSGQGGCPRRPPALAGPLPPPPP. The first 46 residues, 1–46, serve as a signal peptide directing secretion; that stretch reads MPPGGSGQGGCPRRPPALAGPLPPPPPPPPLPLLLGLLLLLGAAEG. At 47–584 the chain is on the extracellular side; it reads ARVSSSLSTT…EVIRESSSTT (538 aa). A Laminin G-like domain is found at 87 to 295; that stretch reads TTYIFGKGGA…HLRLVGEGPS (209 aa). Residues D139 and V156 each coordinate Ca(2+). A glycan (N-linked (GlcNAc...) asparagine) is linked at N186. Ca(2+) contacts are provided by I238 and N240. An O-linked (Xyl...) (heparan sulfate) serine glycan is attached at S350. Disordered regions lie at residues 408-458 and 537-571; these read ATQD…LPPT and EPRR…RGPP. N-linked (GlcNAc...) asparagine glycosylation occurs at N561. Residues 585-605 traverse the membrane as a helical segment; that stretch reads GMVVGIVAAAALCILILLYAM. At 606–660 the chain is on the cytoplasmic side; the sequence is YKYRNRDEGSYQVDQSRNYISNSAQSNGAVVKEKAPAAPKTPSKAKKNKDKEYYV. Positions 627–660 are disordered; it reads NSAQSNGAVVKEKAPAAPKTPSKAKKNKDKEYYV.

This sequence belongs to the neurexin family. As to quaternary structure, interacts (via cytoplasmic C-terminal region) with CASK. Specific isoforms bind alpha-dystroglycan and neuroligins NLGN1, NLGN2 and NLGN3. Interacts with CBLN1, CBLN2 and, less avidly, with CBLN4. Interacts with CLSTN3. In terms of processing, O-glycosylated; contains heparan sulfate. Heparan sulfate attachment is required for synapse development by mediating interactions with neuroligins.

It localises to the presynaptic cell membrane. In terms of biological role, neuronal cell surface protein that may be involved in cell recognition and cell adhesion. The chain is Neurexin-2-beta from Mus musculus (Mouse).